A 1167-amino-acid polypeptide reads, in one-letter code: White collar 1 protein (1167 aa).

Disordered regions lie at residues 1-91 (MNNN…MSGG) and 307-355 (STPA…GASQ). Residues 21–57 (QHQQQQQQQQQQQQQQQQQQQQQQQQQQQQHQHQQQQ) are compositionally biased toward low complexity. Composition is skewed to polar residues over residues 70-91 (TPPT…MSGG) and 307-325 (STPA…TQTI). The segment covering 335 to 348 (VTNAPTPAPFTSTP) has biased composition (low complexity). The PAS 1 domain occupies 381-452 (KLKLGAVDMS…KREFVENNAV (72 aa)). Residue Cys-428 is modified to S-4a-FMN cysteine. Residues 469–508 (LINYRKGGKPFLNLLTMIPIPWDTEEIRYFIGFQIDLVEC) form the PAC 1 domain. Residues 574–644 (KQSWDKMLLE…RELKEAQQHT (71 aa)) form the PAS 2 domain. The 42-residue stretch at 650–691 (FRIRRKNSGYTWFESHGTLFNEQGKGRKCIILVGRKRPVFAL) folds into the PAC 2 domain. In terms of domain architecture, PAS 3 spans 693–763 (RKDLELNGGI…RTIEKARKGK (71 aa)). A compositionally biased stretch (low complexity) spans 849-861 (MSKSGSSDSTGAM). 4 disordered regions span residues 849 to 872 (MSKS…GPGQ), 918 to 952 (KKKR…PSGN), 966 to 1047 (QTGR…TGST), and 1060 to 1167 (VNAL…GLSV). Residues 934-959 (CANCHTRNTPEWRRGPSGNRDLCNSC) form a GATA-type zinc finger. A compositionally biased stretch (polar residues) spans 968–977 (GRVSPRTSSR). The segment covering 986–995 (KKSNSPSHSS) has biased composition (low complexity). The span at 1004-1033 (DSPSTTTATKNSPSLRGSSTTAPGTITTDS) shows a compositional bias: polar residues. Composition is skewed to low complexity over residues 1036 to 1047 (AVASSASGTGST) and 1104 to 1128 (QHQQ…QQHQ).

In terms of assembly, heterodimer of wc-1 and wc-2. Post-translationally, FMN binds covalently to cysteine after exposure to blue light and is reversed in the dark.

Its subcellular location is the nucleus. May function as a transcription factor involved in light regulation. Binds and affects blue light regulation of the al-3 gene. Wc-1 and wc-2 proteins interact via homologous PAS domains, bind to promoters of light regulated genes such as frq, and activate transcription. This is White collar 1 protein (wc-1) from Neurospora crassa (strain ATCC 24698 / 74-OR23-1A / CBS 708.71 / DSM 1257 / FGSC 987).